The sequence spans 488 residues: Ribulose bisphosphate carboxylase large chain (488 aa).

Substrate-binding residues include N127 and T177. K179 serves as the catalytic Proton acceptor. K181 serves as a coordination point for substrate. Mg(2+)-binding residues include K205, D207, and E208. K205 is subject to N6-carboxylysine. H297 (proton acceptor) is an active-site residue. Substrate contacts are provided by R298, H330, and S382.

It belongs to the RuBisCO large chain family. Type I subfamily. As to quaternary structure, heterohexadecamer of 8 large chains and 8 small chains. Mg(2+) serves as cofactor.

The protein resides in the plastid. It localises to the chloroplast. It carries out the reaction 2 (2R)-3-phosphoglycerate + 2 H(+) = D-ribulose 1,5-bisphosphate + CO2 + H2O. The enzyme catalyses D-ribulose 1,5-bisphosphate + O2 = 2-phosphoglycolate + (2R)-3-phosphoglycerate + 2 H(+). In terms of biological role, ruBisCO catalyzes two reactions: the carboxylation of D-ribulose 1,5-bisphosphate, the primary event in carbon dioxide fixation, as well as the oxidative fragmentation of the pentose substrate in the photorespiration process. Both reactions occur simultaneously and in competition at the same active site. The chain is Ribulose bisphosphate carboxylase large chain from Chrysotila carterae (Marine alga).